The chain runs to 218 residues: 7-cyano-7-deazaguanine synthase (218 aa).

9-19 (YSGGMDSFTVL) is an ATP binding site. Zn(2+)-binding residues include Cys185, Cys193, Cys196, and Cys199.

Belongs to the QueC family. Requires Zn(2+) as cofactor.

It catalyses the reaction 7-carboxy-7-deazaguanine + NH4(+) + ATP = 7-cyano-7-deazaguanine + ADP + phosphate + H2O + H(+). The protein operates within purine metabolism; 7-cyano-7-deazaguanine biosynthesis. Its function is as follows. Catalyzes the ATP-dependent conversion of 7-carboxy-7-deazaguanine (CDG) to 7-cyano-7-deazaguanine (preQ(0)). The chain is 7-cyano-7-deazaguanine synthase from Pseudoalteromonas translucida (strain TAC 125).